A 153-amino-acid chain; its full sequence is MVVKAVCVINGDAKGTVFFEQESSGTPVKVSGEVCGLAKGLHGFHVHEFGDNTNGCMSSGPHFNPYGKEHGAPVDENRHLGDLGNIEATGDCPTKVNITDSKITLFGADSIIGRTVVVHADADDLGQGGHELSKSTGNAGARIGCGVIGIAKV.

2 residues coordinate Cu cation: His-45 and His-47. The residue at position 53 (Thr-53) is a Phosphothreonine. Cys-56 and Cys-145 are oxidised to a cystine. Ser-59 is modified (phosphoserine). Residue His-62 participates in Cu cation binding. Residues His-62, His-70, His-79, and Asp-82 each contribute to the Zn(2+) site. His-119 contributes to the Cu cation binding site.

This sequence belongs to the Cu-Zn superoxide dismutase family. In terms of assembly, homodimer. It depends on Cu cation as a cofactor. Zn(2+) serves as cofactor.

The protein localises to the cytoplasm. The enzyme catalyses 2 superoxide + 2 H(+) = H2O2 + O2. Destroys radicals which are normally produced within the cells and which are toxic to biological systems. In Drosophila melanogaster (Fruit fly), this protein is Superoxide dismutase [Cu-Zn].